The chain runs to 150 residues: uncharacterized protein (150 aa).

Residues 5–66 (LDRTDKMLLE…KPNYKKLNLG (62 aa)) form the HTH asnC-type domain. The segment at residues 24-43 (IAALSKKLGIPRTTVHYRIK) is a DNA-binding region (H-T-H motif).

This is an uncharacterized protein from Pyrococcus furiosus (strain ATCC 43587 / DSM 3638 / JCM 8422 / Vc1).